Consider the following 540-residue polypeptide: Chaperonin GroEL (540 aa).

ATP contacts are provided by residues 29–32, 86–90, G413, 476–478, and D492; these read TLGP, DGTTT, and NAA.

Belongs to the chaperonin (HSP60) family. As to quaternary structure, forms a cylinder of 14 subunits composed of two heptameric rings stacked back-to-back. Interacts with the co-chaperonin GroES.

Its subcellular location is the cytoplasm. The enzyme catalyses ATP + H2O + a folded polypeptide = ADP + phosphate + an unfolded polypeptide.. In terms of biological role, together with its co-chaperonin GroES, plays an essential role in assisting protein folding. The GroEL-GroES system forms a nano-cage that allows encapsulation of the non-native substrate proteins and provides a physical environment optimized to promote and accelerate protein folding. In Streptococcus agalactiae serotype V (strain ATCC BAA-611 / 2603 V/R), this protein is Chaperonin GroEL.